The chain runs to 156 residues: ATP synthase subunit b (156 aa).

A helical transmembrane segment spans residues 11–31 (AIAFILFVWFCMKYVWPPLMA).

This sequence belongs to the ATPase B chain family. As to quaternary structure, F-type ATPases have 2 components, F(1) - the catalytic core - and F(0) - the membrane proton channel. F(1) has five subunits: alpha(3), beta(3), gamma(1), delta(1), epsilon(1). F(0) has three main subunits: a(1), b(2) and c(10-14). The alpha and beta chains form an alternating ring which encloses part of the gamma chain. F(1) is attached to F(0) by a central stalk formed by the gamma and epsilon chains, while a peripheral stalk is formed by the delta and b chains.

The protein resides in the cell inner membrane. Its function is as follows. F(1)F(0) ATP synthase produces ATP from ADP in the presence of a proton or sodium gradient. F-type ATPases consist of two structural domains, F(1) containing the extramembraneous catalytic core and F(0) containing the membrane proton channel, linked together by a central stalk and a peripheral stalk. During catalysis, ATP synthesis in the catalytic domain of F(1) is coupled via a rotary mechanism of the central stalk subunits to proton translocation. In terms of biological role, component of the F(0) channel, it forms part of the peripheral stalk, linking F(1) to F(0). The polypeptide is ATP synthase subunit b (Salmonella gallinarum (strain 287/91 / NCTC 13346)).